A 132-amino-acid polypeptide reads, in one-letter code: UPF0047 protein YugU (132 aa).

It belongs to the UPF0047 family.

This is UPF0047 protein YugU (yugU) from Bacillus subtilis (strain 168).